Consider the following 502-residue polypeptide: MSIKAEEISTLIKQQIQNYQSEIEVHDVGTVIQVGDGIARVHGLDNCMAGELVEFSNGVLGMAQNLEESNVGIVILGPYRDIREGDEVKRTGRIMEVPVGEELIGRIVNPLGQPVDGLGPILTSKTRPIESQAPGVMDRKSVHEPLQTGIKAIDALIPIGRGQRELIIGDRQTGKTSVAIDTILNQKDQDMICVYVAIGQKESTVRGVVETLRKHGALDYTIVVTASASQPAPLLYLAPYAGVTMGEEFMYNGKHVLVVYDDLSKQAAAYRELSLLLRRPPGREAFPGDVFYLHSRLLERAAKLSDAKGAGSITALPFVETQAGDISAYIPTNVISITDGQIFLQSDLFFSGVRPAINAGLSVSRVGGSAQIKAMKKVAGTLRLDLASYRELEAFAQFGSDLDQATQAKLNRGARTVEVLKQDLNKPLPVEKQVAILYALTKGYLDDIPVADIRRFEEEYYMYLDQNHKDLLDGIAKTGNLPADEDFKAAIEGFKRTFAPSN.

ATP is bound at residue 169–176 (GDRQTGKT).

It belongs to the ATPase alpha/beta chains family. In terms of assembly, F-type ATPases have 2 components, CF(1) - the catalytic core - and CF(0) - the membrane proton channel. CF(1) has five subunits: alpha(3), beta(3), gamma(1), delta(1), epsilon(1). CF(0) has three main subunits: a(1), b(2) and c(9-12). The alpha and beta chains form an alternating ring which encloses part of the gamma chain. CF(1) is attached to CF(0) by a central stalk formed by the gamma and epsilon chains, while a peripheral stalk is formed by the delta and b chains.

Its subcellular location is the cell membrane. It carries out the reaction ATP + H2O + 4 H(+)(in) = ADP + phosphate + 5 H(+)(out). In terms of biological role, produces ATP from ADP in the presence of a proton gradient across the membrane. The alpha chain is a regulatory subunit. The sequence is that of ATP synthase subunit alpha from Bacillus velezensis (strain DSM 23117 / BGSC 10A6 / LMG 26770 / FZB42) (Bacillus amyloliquefaciens subsp. plantarum).